The following is a 20-amino-acid chain: Hemoglobinase-like protein 1 (20 aa).

This sequence belongs to the peptidase C13 family.

It carries out the reaction Hydrolysis of proteins and small molecule substrates at -Asn-|-Xaa- bonds.. The protein is Hemoglobinase-like protein 1 of Fasciola hepatica (Liver fluke).